The chain runs to 130 residues: MAKAASTRPRRKERKNISSGVAHVLASFNNTMVTISDAQGNAISWSSAGSQGFKGSRKSTPYAAQVAAEDAGRKAREHGMETLEIEVSGPGAGRESALRALQTIGFSITAIRDLTPIPHNGCRPRKRRRV.

Belongs to the universal ribosomal protein uS11 family. As to quaternary structure, part of the 30S ribosomal subunit. Interacts with proteins S7 and S18. Binds to IF-3.

Located on the platform of the 30S subunit, it bridges several disparate RNA helices of the 16S rRNA. Forms part of the Shine-Dalgarno cleft in the 70S ribosome. In Acidiphilium cryptum (strain JF-5), this protein is Small ribosomal subunit protein uS11.